A 393-amino-acid chain; its full sequence is uncharacterized protein (393 aa).

The TRAM domain maps to 12 to 70 (APLLGSKIKLNIEKLAIGGAGVARHEGMVVFVPQAAPNEEILAEITLVKKNFMEARVVE). Residues Cys-83, Cys-89, Cys-92, and Cys-166 each contribute to the [4Fe-4S] cluster site. S-adenosyl-L-methionine is bound by residues Gln-221, Tyr-250, Glu-273, and Asp-316. The Nucleophile role is filled by Cys-343.

This sequence belongs to the class I-like SAM-binding methyltransferase superfamily. RNA M5U methyltransferase family.

This is an uncharacterized protein from Bdellovibrio bacteriovorus (strain ATCC 15356 / DSM 50701 / NCIMB 9529 / HD100).